A 544-amino-acid chain; its full sequence is Chaperonin GroEL 1 (544 aa).

ATP is bound by residues 29–32 (TLGP), 86–90 (DGTTT), glycine 413, and aspartate 495.

It belongs to the chaperonin (HSP60) family. Forms a cylinder of 14 subunits composed of two heptameric rings stacked back-to-back. Interacts with the co-chaperonin GroES.

The protein resides in the cytoplasm. The catalysed reaction is ATP + H2O + a folded polypeptide = ADP + phosphate + an unfolded polypeptide.. Together with its co-chaperonin GroES, plays an essential role in assisting protein folding. The GroEL-GroES system forms a nano-cage that allows encapsulation of the non-native substrate proteins and provides a physical environment optimized to promote and accelerate protein folding. The sequence is that of Chaperonin GroEL 1 from Synechococcus sp. (strain ATCC 27144 / PCC 6301 / SAUG 1402/1) (Anacystis nidulans).